We begin with the raw amino-acid sequence, 1198 residues long: Tetratricopeptide repeat protein 17 (1198 aa).

Residues 295-328 (FTSYYTLGNIYAMLGEYNHSVLCYDHALQAKPGF) form a TPR 1 repeat. A coiled-coil region spans residues 340–382 (CQQKLEQKLEAQHRSLQRTLNELKEYQKQHDHYLRQQEILEKH). TPR repeat units lie at residues 619–652 (WLIL…APVQ) and 689–722 (PLTF…STKC). Disordered regions lie at residues 774–793 (LDAA…PVLS) and 902–954 (VKKP…YQSL). The span at 902-914 (VKKPKGDHKKPPG) shows a compositional bias: basic residues. TPR repeat units lie at residues 1071-1105 (SWVL…APHQ), 1108-1141 (DVPL…APHF), and 1142-1175 (AVNH…QPEF).

This sequence belongs to the TTC17 family. In terms of assembly, interacts with CATIP.

The protein localises to the cytoplasm. It is found in the cell membrane. Its subcellular location is the cytoskeleton. In terms of biological role, plays a role in primary ciliogenesis by modulating actin polymerization. The polypeptide is Tetratricopeptide repeat protein 17 (Ttc17) (Mus musculus (Mouse)).